The chain runs to 183 residues: Peptidyl-prolyl cis-trans isomerase 11 (183 aa).

In terms of domain architecture, PPIase cyclophilin-type spans 20–182; sequence FLEVTAGGAP…LPIVVVQCGQ (163 aa).

Belongs to the cyclophilin-type PPIase family. PPIase H subfamily.

The enzyme catalyses [protein]-peptidylproline (omega=180) = [protein]-peptidylproline (omega=0). Functionally, PPIases accelerate the folding of proteins. It catalyzes the cis-trans isomerization of proline imidic peptide bonds in oligopeptides. This Caenorhabditis elegans protein is Peptidyl-prolyl cis-trans isomerase 11 (cyn-11).